Here is a 205-residue protein sequence, read N- to C-terminus: Probable peptidyl-tRNA hydrolase 2 (205 aa).

Residues Tyr-40–Ser-49 show a composition bias toward polar residues. Positions Tyr-40 to Glu-68 are disordered. Residues Ser-65 and Ser-79 each carry the phosphoserine modification.

Belongs to the PTH2 family.

The enzyme catalyses an N-acyl-L-alpha-aminoacyl-tRNA + H2O = an N-acyl-L-amino acid + a tRNA + H(+). Its function is as follows. The natural substrate for this enzyme may be peptidyl-tRNAs which drop off the ribosome during protein synthesis. In Schizosaccharomyces pombe (strain 972 / ATCC 24843) (Fission yeast), this protein is Probable peptidyl-tRNA hydrolase 2.